A 95-amino-acid polypeptide reads, in one-letter code: Aspartyl/glutamyl-tRNA(Asn/Gln) amidotransferase subunit C (95 aa).

The protein belongs to the GatC family. In terms of assembly, heterotrimer of A, B and C subunits.

The catalysed reaction is L-glutamyl-tRNA(Gln) + L-glutamine + ATP + H2O = L-glutaminyl-tRNA(Gln) + L-glutamate + ADP + phosphate + H(+). It catalyses the reaction L-aspartyl-tRNA(Asn) + L-glutamine + ATP + H2O = L-asparaginyl-tRNA(Asn) + L-glutamate + ADP + phosphate + 2 H(+). Its function is as follows. Allows the formation of correctly charged Asn-tRNA(Asn) or Gln-tRNA(Gln) through the transamidation of misacylated Asp-tRNA(Asn) or Glu-tRNA(Gln) in organisms which lack either or both of asparaginyl-tRNA or glutaminyl-tRNA synthetases. The reaction takes place in the presence of glutamine and ATP through an activated phospho-Asp-tRNA(Asn) or phospho-Glu-tRNA(Gln). The chain is Aspartyl/glutamyl-tRNA(Asn/Gln) amidotransferase subunit C from Vesicomyosocius okutanii subsp. Calyptogena okutanii (strain HA).